A 598-amino-acid chain; its full sequence is MKPTGTDPRILSIAAEVAKSPEQNVPVILLKLKEIINITPLGSSELKKIKQDIYCYDLIQYCLLVLSQDYSRIQGGWTTISQLTQILSHCCVGLEPGEDAEEFYNELLPSAAENFLVLGRQLQTCFINAAKAEEKDELLHFFQIVTDSLFWLLGGHVELIQNVLQSDHFLHLLQADNVQIGSAVMMMLQNILQINSGDLLRIGRKALYSILDEVIFKLFSTPSPVIRSTATKLLLLMAESHQEILILLRQSTCYKGLRRLLSKQETGTEFSQELRQLVGLLSPMVYQEVEEQKLHQAACLIQAYWKGFQTRKRLKKLPSAVIALQRSFRSKRSKMLLEINRQKEEEDLKLQLQLQRQRAMRLSRELQLSMLEIVHPGQVEKHYREMEEKSALIIQKHWRGYRERKNFHQQRQSLIEYKAAVTLQRAALKFLAKCRKKKKLFAPWRGLQELTDARRVELKKRVDDYVRRHLGSPMSDVVSRELHAQAQERLQHYFMGRALEERAQQHREALIAQISTNVEQLMKAPSLKEAEGKEPELFLSRSRPVAAKAKQAHLTTLKHIQAPWWKKLGEESGDEIDVPKDELSIELENLFIGGTKPP.

Positions 1-157 (MKPTGTDPRI…SLFWLLGGHV (157 aa)) are interaction with BBS1, BBS8 and BBS9. The segment at 287–598 (QEVEEQKLHQ…NLFIGGTKPP (312 aa)) is interaction with CEP290, BBS1, BBS2, BBS4, BBS5, BBS7, BBS8 and BBS9. IQ domains are found at residues 294 to 317 (LHQA…LKKL), 318 to 338 (PSAV…MLLE), 387 to 416 (EEKS…SLIE), and 417 to 437 (YKAA…CRKK). A coiled-coil region spans residues 336 to 373 (LLEINRQKEEEDLKLQLQLQRQRAMRLSRELQLSMLEI). Positions 530 to 598 (AEGKEPELFL…NLFIGGTKPP (69 aa)) are interaction with BBS1, BBS2, BBS4, BBS7, BBS8 and BBS9. Serine 572 carries the phosphoserine modification.

In terms of assembly, interacts with CEP290/NPHP6; IQCB1/NPHP5 and CEP290 are proposed to form a functional NPHP5-6 module/NPHP6; localized to the centrosome. Interacts with calmodulin, ATXN10. Interacts with NPHP1, INVS, NPHP4 and RPGRIP1L; these interactions likely require additional interactors. Associates with the BBSome complex; interacts with BBS1, BBS2, BBS4, BBS5, BBS7, BBS8 and BBS9. Ubiquitously expressed in fetal and adult tissues. Localized to the outer segments and connecting cilia of photoreceptor cells. Up-regulated in a number of primary colorectal and gastric tumors.

The protein localises to the cytoplasm. Its subcellular location is the cytoskeleton. It localises to the microtubule organizing center. It is found in the centrosome. The protein resides in the centriole. Involved in ciliogenesis. The function in an early step in cilia formation depends on its association with CEP290/NPHP6. Involved in regulation of the BBSome complex integrity, specifically for presence of BBS2 and BBS5 in the complex, and in ciliary targeting of selected BBSome cargos. May play a role in controlling entry of the BBSome complex to cilia possibly implicating CEP290/NPHP6. The protein is IQ calmodulin-binding motif-containing protein 1 (IQCB1) of Homo sapiens (Human).